The sequence spans 160 residues: Ribosomal RNA large subunit methyltransferase H (160 aa).

S-adenosyl-L-methionine contacts are provided by leucine 76 and glycine 108.

This sequence belongs to the RNA methyltransferase RlmH family. In terms of assembly, homodimer.

Its subcellular location is the cytoplasm. It carries out the reaction pseudouridine(1915) in 23S rRNA + S-adenosyl-L-methionine = N(3)-methylpseudouridine(1915) in 23S rRNA + S-adenosyl-L-homocysteine + H(+). Functionally, specifically methylates the pseudouridine at position 1915 (m3Psi1915) in 23S rRNA. The protein is Ribosomal RNA large subunit methyltransferase H of Rhodopseudomonas palustris (strain BisB5).